The following is a 382-amino-acid chain: Gap junction alpha-1 protein (382 aa).

Residues 2–23 (GDWSALGKLLDKVQAYSTAGGK) are Cytoplasmic-facing. Serine 5 is subject to Phosphoserine. A helical transmembrane segment spans residues 24–44 (VWLSVLFIFRILLLGTAVESA). Topologically, residues 45–76 (WGDEQSAFRCNTQQPGCENVCYDKSFPISHVR) are extracellular. 2 disulfide bridges follow: cysteine 54/cysteine 192 and cysteine 187/cysteine 198. A helical membrane pass occupies residues 77–97 (FWVLQIIFVSVPTLLYLAHVF). The Cytoplasmic segment spans residues 98–155 (YVMRKEEKLNKKEEELKVAQTDGVNVEMHLKQIEIKKFKYGIEEHGKVKMRGGLLRTY). Lysine 144 is covalently cross-linked (Glycyl lysine isopeptide (Lys-Gly) (interchain with G-Cter in SUMO)). The helical transmembrane segment at 156 to 176 (IISILFKSVFEVAFLLIQWYI) threads the bilayer. Topologically, residues 177–207 (YGFSLSAVYTCKRDPCPHQVDCFLSRPTEKT) are extracellular. The helical transmembrane segment at 208 to 228 (IFIIFMLVVSLVSLALNIIEL) threads the bilayer. At 229 to 382 (FYAFFKGVKD…SRPRPDDLEI (154 aa)) the chain is on the cytoplasmic side. Lysine 237 is covalently cross-linked (Glycyl lysine isopeptide (Lys-Gly) (interchain with G-Cter in SUMO)). The segment at 244 to 382 (SDPYHATTGP…SRPRPDDLEI (139 aa)) is interaction with NOV. Tyrosine 247 carries the phosphotyrosine modification. A phosphoserine mark is found at serine 255, serine 257, and serine 262. The interaction with UBQLN4 stretch occupies residues 264 to 382 (KYAYFNGCSS…SRPRPDDLEI (119 aa)). Position 271 is an S-nitrosocysteine (cysteine 271). Threonine 275 bears the Phosphothreonine mark. Phosphoserine occurs at positions 306 and 314. Over residues 317-332 (QNRMGQAGSTISNSHA) the composition is skewed to polar residues. The tract at residues 317–382 (QNRMGQAGST…SRPRPDDLEI (66 aa)) is disordered. Position 325 is a phosphoserine; by CK1 (serine 325). Residue threonine 326 is modified to Phosphothreonine. Residues serine 328 and serine 330 each carry the phosphoserine; by CK1 modification. Over residues 342–351 (QNSKKLDAGH) the composition is skewed to basic and acidic residues. Phosphoserine is present on residues serine 344 and serine 365. The segment covering 362 to 374 (RPSSRASSRASSR) has biased composition (low complexity). Serine 368 bears the Phosphoserine; by PKC/PRKCG and PKC/PRKCD mark. Phosphoserine is present on residues serine 369 and serine 373.

Belongs to the connexin family. Alpha-type (group II) subfamily. In terms of assembly, a connexon is composed of a hexamer of connexins. Interacts with SGSM3. Interacts with RIC1/CIP150. Interacts with CNST and CSNK1D. Interacts (via C-terminus) with TJP1. Interacts (via C-terminus) with SRC (via SH3 domain). Interacts (not ubiquitinated) with UBQLN4 (via UBA domain). Interacts with NOV. Interacts with TMEM65. Interacts with ANK3/ANKG and PKP2. Phosphorylation at Ser-325, Ser-328 and Ser-330 by CK1 modulates gap junction assembly. Phosphorylated at Ser-368 by PRKCG; phosphorylation induces disassembly of gap junction plaques and inhibition of gap junction activity. Phosphorylation at Ser-368 by PRKCD triggers its internalization into small vesicles leading to proteasome-mediated degradation. Post-translationally, sumoylated with SUMO1, SUMO2 and SUMO3, which may regulate the level of functional Cx43 gap junctions at the plasma membrane. May be desumoylated by SENP1 or SENP2. In terms of processing, S-nitrosylation at Cys-271 is enriched at the muscle endothelial gap junction in arteries, it augments channel permeability and may regulate of smooth muscle cell to endothelial cell communication. Acetylated in the developing cortex; leading to delocalization from the cell membrane.

The protein localises to the cell membrane. Its subcellular location is the cell junction. It is found in the gap junction. It localises to the endoplasmic reticulum. Functionally, gap junction protein that acts as a regulator of bladder capacity. A gap junction consists of a cluster of closely packed pairs of transmembrane channels, the connexons, through which materials of low MW diffuse from one cell to a neighboring cell. May play a critical role in the physiology of hearing by participating in the recycling of potassium to the cochlear endolymph. Negative regulator of bladder functional capacity: acts by enhancing intercellular electrical and chemical transmission, thus sensitizing bladder muscles to cholinergic neural stimuli and causing them to contract. May play a role in cell growth inhibition through the regulation of NOV expression and localization. Plays an essential role in gap junction communication in the ventricles. The protein is Gap junction alpha-1 protein (GJA1) of Sus scrofa (Pig).